The sequence spans 267 residues: Dolichol-phosphate mannosyltransferase (267 aa).

Ser-2 is subject to N-acetylserine. Residues 2 to 238 lie on the Cytoplasmic side of the membrane; the sequence is SIEYSVIVPA…QQLKELYVFK (237 aa). GDP-alpha-D-mannose is bound by residues Pro-10, Tyr-12, Glu-14, Val-42, Asp-44, Asp-95, Ala-96, Asp-97, Gln-99, and Arg-122. The Mg(2+) site is built by Asp-97 and Gln-99. Residues Asp-97 and Gln-99 each contribute to the Mn(2+) site. The residue at position 141 (Ser-141) is a Phosphoserine; by PKA. GDP-alpha-D-mannose contacts are provided by Lys-183, Arg-212, and Lys-218. Residues 239–259 form a helical; Anchor for type IV membrane protein membrane-spanning segment; the sequence is FGANNLILFITFWSILFFYVC. Residues 260-267 lie on the Lumenal side of the membrane; that stretch reads YQLYHLVF.

This sequence belongs to the glycosyltransferase 2 family. In terms of assembly, interacts with the C-terminus of SAC1, thereby sequestering it to the endoplasmic reticulum in exponentially growing cells. Under nutrient limitation conditions, this interaction is rapidly abolished. Mg(2+) serves as cofactor. The cofactor is Mn(2+). Requires Ca(2+) as cofactor.

It localises to the endoplasmic reticulum membrane. It carries out the reaction a di-trans,poly-cis-dolichyl phosphate + GDP-alpha-D-mannose = a di-trans,poly-cis-dolichyl beta-D-mannosyl phosphate + GDP. It participates in protein modification; protein glycosylation. Its activity is regulated as follows. Inhibited by acetylsalicylic acid (aspirin). Functionally, transfers mannose from GDP-mannose to dolichol monophosphate to form dolichol phosphate mannose (Dol-P-Man) which is the mannosyl donor in pathways leading to N-glycosylation, glycosyl phosphatidylinositol membrane anchoring, and O-mannosylation of proteins. This Saccharomyces cerevisiae (strain ATCC 204508 / S288c) (Baker's yeast) protein is Dolichol-phosphate mannosyltransferase.